A 697-amino-acid polypeptide reads, in one-letter code: DNA ligase (697 aa).

NAD(+) is bound by residues Asp-41–Asp-45, Ser-90–Leu-91, and Glu-129. Lys-131 functions as the N6-AMP-lysine intermediate in the catalytic mechanism. Positions 152, 189, 308, and 332 each coordinate NAD(+). Zn(2+)-binding residues include Cys-426, Cys-429, Cys-444, and Cys-449. The 81-residue stretch at Ala-617–Thr-697 folds into the BRCT domain.

It belongs to the NAD-dependent DNA ligase family. LigA subfamily. It depends on Mg(2+) as a cofactor. Mn(2+) is required as a cofactor.

The catalysed reaction is NAD(+) + (deoxyribonucleotide)n-3'-hydroxyl + 5'-phospho-(deoxyribonucleotide)m = (deoxyribonucleotide)n+m + AMP + beta-nicotinamide D-nucleotide.. DNA ligase that catalyzes the formation of phosphodiester linkages between 5'-phosphoryl and 3'-hydroxyl groups in double-stranded DNA using NAD as a coenzyme and as the energy source for the reaction. It is essential for DNA replication and repair of damaged DNA. The protein is DNA ligase of Synechococcus sp. (strain CC9311).